We begin with the raw amino-acid sequence, 154 residues long: UPF0260 protein HI_1355 (154 aa).

This sequence belongs to the UPF0260 family.

The sequence is that of UPF0260 protein HI_1355 from Haemophilus influenzae (strain ATCC 51907 / DSM 11121 / KW20 / Rd).